We begin with the raw amino-acid sequence, 46 residues long: U2-plectoxin-Pt1a (46 aa).

In terms of processing, contains 4 disulfide bonds. Expressed by the venom gland.

The protein localises to the secreted. In terms of biological role, potent toxin that may paralyze and/or kill insect pests such as H.virescens (lepidoptera), S.exigua (beet armyworm) and M.sexta (tobacco hornworm). The sequence is that of U2-plectoxin-Pt1a from Plectreurys tristis (Spider).